We begin with the raw amino-acid sequence, 491 residues long: Protein nucleotidyltransferase YdiU (491 aa).

ATP contacts are provided by Gly-94, Gly-96, Arg-97, Lys-117, Asp-129, Gly-130, Arg-180, and Arg-187. Asp-256 (proton acceptor) is an active-site residue. Mg(2+)-binding residues include Asn-257 and Asp-266. Asp-266 is a binding site for ATP.

Belongs to the SELO family. Requires Mg(2+) as cofactor. Mn(2+) serves as cofactor.

It catalyses the reaction L-seryl-[protein] + ATP = 3-O-(5'-adenylyl)-L-seryl-[protein] + diphosphate. It carries out the reaction L-threonyl-[protein] + ATP = 3-O-(5'-adenylyl)-L-threonyl-[protein] + diphosphate. The catalysed reaction is L-tyrosyl-[protein] + ATP = O-(5'-adenylyl)-L-tyrosyl-[protein] + diphosphate. The enzyme catalyses L-histidyl-[protein] + UTP = N(tele)-(5'-uridylyl)-L-histidyl-[protein] + diphosphate. It catalyses the reaction L-seryl-[protein] + UTP = O-(5'-uridylyl)-L-seryl-[protein] + diphosphate. It carries out the reaction L-tyrosyl-[protein] + UTP = O-(5'-uridylyl)-L-tyrosyl-[protein] + diphosphate. In terms of biological role, nucleotidyltransferase involved in the post-translational modification of proteins. It can catalyze the addition of adenosine monophosphate (AMP) or uridine monophosphate (UMP) to a protein, resulting in modifications known as AMPylation and UMPylation. The chain is Protein nucleotidyltransferase YdiU from Clostridium botulinum (strain Eklund 17B / Type B).